Reading from the N-terminus, the 275-residue chain is tRNA pseudouridine synthase A (275 aa).

Residue aspartate 56 is the Nucleophile of the active site. Substrate is bound at residue tyrosine 109.

The protein belongs to the tRNA pseudouridine synthase TruA family.

The catalysed reaction is uridine(38/39/40) in tRNA = pseudouridine(38/39/40) in tRNA. In terms of biological role, formation of pseudouridine at positions 38, 39 and 40 in the anticodon stem and loop of transfer RNAs. In Methanothermobacter thermautotrophicus (strain ATCC 29096 / DSM 1053 / JCM 10044 / NBRC 100330 / Delta H) (Methanobacterium thermoautotrophicum), this protein is tRNA pseudouridine synthase A.